The chain runs to 129 residues: Large ribosomal subunit protein uL22 (129 aa).

The protein belongs to the universal ribosomal protein uL22 family. As to quaternary structure, part of the 50S ribosomal subunit.

Its function is as follows. This protein binds specifically to 23S rRNA; its binding is stimulated by other ribosomal proteins, e.g. L4, L17, and L20. It is important during the early stages of 50S assembly. It makes multiple contacts with different domains of the 23S rRNA in the assembled 50S subunit and ribosome. In terms of biological role, the globular domain of the protein is located near the polypeptide exit tunnel on the outside of the subunit, while an extended beta-hairpin is found that lines the wall of the exit tunnel in the center of the 70S ribosome. The chain is Large ribosomal subunit protein uL22 from Agrobacterium fabrum (strain C58 / ATCC 33970) (Agrobacterium tumefaciens (strain C58)).